Here is a 202-residue protein sequence, read N- to C-terminus: MDTDSGDLSEGELSPGPEQFSSKSFAVQAQKKILSKMATKTMANMLIDDTSSEIFDELFKVTKEYVKNKKEAHKVLKDLVKVAVKVGILYRNKQFSLEELEIVENFRKKLNQTCMTAVSFFEVEYTFDKNVLSGLLHECKTLLHELVQRHLTPKSHSRIDRVFNHFADVEFLTALYSLEGNYRPYLKRICEGVNKLLDERVL.

Residues 1–10 are compositionally biased toward acidic residues; that stretch reads MDTDSGDLSE. The interval 1-24 is disordered; it reads MDTDSGDLSEGELSPGPEQFSSKS.

This sequence belongs to the TNFAIP8 family.

The protein resides in the cytoplasm. It localises to the cell membrane. May act as a lipid transfer protein. In Xenopus laevis (African clawed frog), this protein is Tumor necrosis factor alpha-induced protein 8-like protein 3 (tnfaip8l3).